A 120-amino-acid chain; its full sequence is NAD(P)H-quinone oxidoreductase subunit 3, chloroplastic (120 aa).

3 consecutive transmembrane segments (helical) span residues phenylalanine 10–leucine 30, methionine 64–methionine 84, and leucine 89–valine 109.

This sequence belongs to the complex I subunit 3 family. As to quaternary structure, NDH is composed of at least 16 different subunits, 5 of which are encoded in the nucleus.

The protein localises to the plastid. The protein resides in the chloroplast thylakoid membrane. It catalyses the reaction a plastoquinone + NADH + (n+1) H(+)(in) = a plastoquinol + NAD(+) + n H(+)(out). It carries out the reaction a plastoquinone + NADPH + (n+1) H(+)(in) = a plastoquinol + NADP(+) + n H(+)(out). Its function is as follows. NDH shuttles electrons from NAD(P)H:plastoquinone, via FMN and iron-sulfur (Fe-S) centers, to quinones in the photosynthetic chain and possibly in a chloroplast respiratory chain. The immediate electron acceptor for the enzyme in this species is believed to be plastoquinone. Couples the redox reaction to proton translocation, and thus conserves the redox energy in a proton gradient. This chain is NAD(P)H-quinone oxidoreductase subunit 3, chloroplastic, found in Chaetosphaeridium globosum (Charophycean green alga).